The primary structure comprises 150 residues: Protein E6 (150 aa).

Zinc fingers lie at residues 31 to 67 (CVFC…CAIC) and 104 to 140 (CYLC…CFHC).

It belongs to the papillomaviridae E6 protein family. In terms of assembly, forms homodimers. Interacts with ubiquitin-protein ligase UBE3A/E6-AP; this interaction stimulates UBE3A ubiquitin activity. Interacts with host TP53 and EP300; this interaction inhibits TP53 activity.

Its subcellular location is the host cytoplasm. The protein resides in the host nucleus. Functionally, this protein may be involved in the oncogenic potential of this virus (cervical neoplasia-associated virus). In terms of biological role, plays a major role in the induction and maintenance of cellular transformation. E6 associates with host UBE3A/E6-AP ubiquitin-protein ligase and modulates its activity. Sequesters tumor suppressor TP53 in the host cytoplasm and modulates its activity by interacting with host EP300 that results in the reduction of TP53 acetylation and activation. In turn, apoptosis induced by DNA damage is inhibited. E6 also protects host keratinocytes from apoptosis by mediating the degradation of host BAK1. May also inhibit host immune response. The polypeptide is Protein E6 (Human papillomavirus 44).